We begin with the raw amino-acid sequence, 213 residues long: MDTLWDISPPVSPATPVWPGDTPVSVERVWRMEAGSPVNVARLTLSPHTGAHCDAPLHYDADGAPIGAVPLDTYLGPCRVIHCIGASPVVQPVDVAAALDGVPPRVLLRTYARASVEQWDSHFCAVAPETVDLLAAHGVKLIGIDTPSLDPQESKTMDAHHRVRAHRMAILEGIVLDDVPPGDYELIALPLKFATLDASPVRAVLRALPARAS.

Tryptophan 18 contributes to the substrate binding site. 3 residues coordinate Zn(2+): histidine 48, histidine 52, and aspartate 54. The active-site Proton donor/acceptor is the histidine 58. Residues histidine 160 and glutamate 172 each coordinate Zn(2+).

This sequence belongs to the Cyclase 1 superfamily. KynB family. As to quaternary structure, homodimer. Zn(2+) serves as cofactor.

The enzyme catalyses N-formyl-L-kynurenine + H2O = L-kynurenine + formate + H(+). The protein operates within amino-acid degradation; L-tryptophan degradation via kynurenine pathway; L-kynurenine from L-tryptophan: step 2/2. Functionally, catalyzes the hydrolysis of N-formyl-L-kynurenine to L-kynurenine, the second step in the kynurenine pathway of tryptophan degradation. The sequence is that of Kynurenine formamidase from Burkholderia lata (strain ATCC 17760 / DSM 23089 / LMG 22485 / NCIMB 9086 / R18194 / 383).